The following is a 398-amino-acid chain: Gastric triacylglycerol lipase (398 aa).

Residues methionine 1–glycine 19 form the signal peptide. Residues asparagine 34 and asparagine 99 are each glycosylated (N-linked (GlcNAc...) asparagine). Residues proline 78–tryptophan 377 form the AB hydrolase-1 domain. Catalysis depends on serine 172, which acts as the Nucleophile. Cysteine 246 and cysteine 255 are oxidised to a cystine. Asparagine 271 and asparagine 327 each carry an N-linked (GlcNAc...) asparagine glycan. Active-site charge relay system residues include aspartate 343 and histidine 372.

It belongs to the AB hydrolase superfamily. Lipase family.

It localises to the secreted. The enzyme catalyses a triacylglycerol + H2O = a diacylglycerol + a fatty acid + H(+). The catalysed reaction is 1,2,3-tri-(9Z-octadecenoyl)-glycerol + H2O = 1,2-di-(9Z-octadecenoyl)-sn-glycerol + (9Z)-octadecenoate + H(+). It carries out the reaction 1,2,3-trioctanoylglycerol + H2O = 1,2-dioctanoyl-sn-glycerol + octanoate + H(+). Catalyzes the hydrolysis of triacylglycerols to yield free fatty acids, diacylglycerol, monoacylglycerol, and glycerol. Shows a preferential hydrolysis at the sn-3 position of triacylglycerol. This chain is Gastric triacylglycerol lipase (LIPF), found in Homo sapiens (Human).